The chain runs to 849 residues: Probable ubiquitin carboxyl-terminal hydrolase 1 (849 aa).

The region spanning 20 to 120 (QPASLPFQDS…EGLAIERKVL (101 aa)) is the DUSP domain. A USP domain is found at 279–848 (CGLYNLGNSC…SAYVLFYRAK (570 aa)). Cysteine 288 (nucleophile) is an active-site residue. Histidine 806 acts as the Proton acceptor in catalysis.

The protein belongs to the peptidase C19 family.

The catalysed reaction is Thiol-dependent hydrolysis of ester, thioester, amide, peptide and isopeptide bonds formed by the C-terminal Gly of ubiquitin (a 76-residue protein attached to proteins as an intracellular targeting signal).. The polypeptide is Probable ubiquitin carboxyl-terminal hydrolase 1 (ubp1) (Schizosaccharomyces pombe (strain 972 / ATCC 24843) (Fission yeast)).